Here is a 636-residue protein sequence, read N- to C-terminus: 1-deoxy-D-xylulose-5-phosphate synthase (636 aa).

Thiamine diphosphate is bound by residues His73 and 114–116; that span reads SHA. Asp146 is a binding site for Mg(2+). Thiamine diphosphate contacts are provided by residues 147 to 148, Asn176, Tyr287, and Glu368; that span reads GA. Asn176 is a Mg(2+) binding site.

This sequence belongs to the transketolase family. DXPS subfamily. Homodimer. The cofactor is Mg(2+). Thiamine diphosphate serves as cofactor.

The catalysed reaction is D-glyceraldehyde 3-phosphate + pyruvate + H(+) = 1-deoxy-D-xylulose 5-phosphate + CO2. It functions in the pathway metabolic intermediate biosynthesis; 1-deoxy-D-xylulose 5-phosphate biosynthesis; 1-deoxy-D-xylulose 5-phosphate from D-glyceraldehyde 3-phosphate and pyruvate: step 1/1. Its function is as follows. Catalyzes the acyloin condensation reaction between C atoms 2 and 3 of pyruvate and glyceraldehyde 3-phosphate to yield 1-deoxy-D-xylulose-5-phosphate (DXP). This is 1-deoxy-D-xylulose-5-phosphate synthase from Corynebacterium glutamicum (strain ATCC 13032 / DSM 20300 / JCM 1318 / BCRC 11384 / CCUG 27702 / LMG 3730 / NBRC 12168 / NCIMB 10025 / NRRL B-2784 / 534).